A 112-amino-acid polypeptide reads, in one-letter code: Keratin-associated protein 12-4 (112 aa).

Tandem repeats lie at residues 10 to 14 (CPMAC), 20 to 24 (CVPST), 25 to 29 (CYPPE), 35 to 39 (CCCSA), 41 to 45 (CVALL), 46 to 50 (CRPLC), 56 to 60 (CQPAC), 61 to 65 (CVPSP), 66 to 70 (CQVAC), 71 to 75 (CVPVS), 76 to 80 (CKPVL), 81 to 85 (CVASF), 86 to 90 (CPTSG), 91 to 95 (CCQPF), and 96 to 100 (CPTLV). Positions 10–100 (CPMACPGSPC…CCQPFCPTLV (91 aa)) are 15 X 5 AA approximate repeats.

Belongs to the KRTAP type 12 family. As to quaternary structure, interacts with hair keratins. As to expression, restricted to a narrow region of the hair fiber cuticle, lying approximately 20 cell layers above the apex of the dermal papilla of the hair root; not detected in any other tissues.

Functionally, in the hair cortex, hair keratin intermediate filaments are embedded in an interfilamentous matrix, consisting of hair keratin-associated proteins (KRTAP), which are essential for the formation of a rigid and resistant hair shaft through their extensive disulfide bond cross-linking with abundant cysteine residues of hair keratins. The matrix proteins include the high-sulfur and high-glycine-tyrosine keratins. This chain is Keratin-associated protein 12-4 (KRTAP12-4), found in Homo sapiens (Human).